A 293-amino-acid polypeptide reads, in one-letter code: Small ribosomal subunit protein uS2 (293 aa).

The disordered stretch occupies residues 219–293 (IASAKPDEPY…WATPKTEDWA (75 aa)).

This sequence belongs to the universal ribosomal protein uS2 family. Component of the small ribosomal subunit. Mature ribosomes consist of a small (40S) and a large (60S) subunit. The 40S subunit contains about 33 different proteins and 1 molecule of RNA (18S). The 60S subunit contains about 49 different proteins and 3 molecules of RNA (28S, 5.8S and 5S). Interacts with ribosomal protein S21.

It is found in the cytoplasm. In terms of biological role, required for the assembly and/or stability of the 40S ribosomal subunit. Required for the processing of the 20S rRNA-precursor to mature 18S rRNA in a late step of the maturation of 40S ribosomal subunits. This chain is Small ribosomal subunit protein uS2, found in Hydra viridissima (Green hydra).